A 577-amino-acid chain; its full sequence is Glycine--tRNA ligase (577 aa).

Residues R96 and E161 each coordinate substrate. Residues 193–195 (RNE), 203–208 (IRLREF), 319–320 (EI), and 434–437 (GIDR) each bind ATP. 208 to 212 (FSQAE) serves as a coordination point for substrate. 430-434 (EPSFG) is a binding site for substrate.

Belongs to the class-II aminoacyl-tRNA synthetase family.

It is found in the cytoplasm. It catalyses the reaction tRNA(Gly) + glycine + ATP = glycyl-tRNA(Gly) + AMP + diphosphate. Catalyzes the attachment of glycine to tRNA(Gly). The sequence is that of Glycine--tRNA ligase from Methanothrix thermoacetophila (strain DSM 6194 / JCM 14653 / NBRC 101360 / PT) (Methanosaeta thermophila).